The chain runs to 347 residues: UDP-N-acetylglucosamine--N-acetylmuramyl-(pentapeptide) pyrophosphoryl-undecaprenol N-acetylglucosamine transferase (347 aa).

Residues T11–G13, N122, R163, S189, and Q279 each bind UDP-N-acetyl-alpha-D-glucosamine.

It belongs to the glycosyltransferase 28 family. MurG subfamily.

It localises to the cell inner membrane. The enzyme catalyses di-trans,octa-cis-undecaprenyl diphospho-N-acetyl-alpha-D-muramoyl-L-alanyl-D-glutamyl-meso-2,6-diaminopimeloyl-D-alanyl-D-alanine + UDP-N-acetyl-alpha-D-glucosamine = di-trans,octa-cis-undecaprenyl diphospho-[N-acetyl-alpha-D-glucosaminyl-(1-&gt;4)]-N-acetyl-alpha-D-muramoyl-L-alanyl-D-glutamyl-meso-2,6-diaminopimeloyl-D-alanyl-D-alanine + UDP + H(+). Its pathway is cell wall biogenesis; peptidoglycan biosynthesis. Its function is as follows. Cell wall formation. Catalyzes the transfer of a GlcNAc subunit on undecaprenyl-pyrophosphoryl-MurNAc-pentapeptide (lipid intermediate I) to form undecaprenyl-pyrophosphoryl-MurNAc-(pentapeptide)GlcNAc (lipid intermediate II). The polypeptide is UDP-N-acetylglucosamine--N-acetylmuramyl-(pentapeptide) pyrophosphoryl-undecaprenol N-acetylglucosamine transferase (Sulfurihydrogenibium sp. (strain YO3AOP1)).